A 99-amino-acid polypeptide reads, in one-letter code: Large ribosomal subunit protein uL23 (99 aa).

This sequence belongs to the universal ribosomal protein uL23 family. In terms of assembly, part of the 50S ribosomal subunit. Contacts protein L29, and trigger factor when it is bound to the ribosome.

Functionally, one of the early assembly proteins it binds 23S rRNA. One of the proteins that surrounds the polypeptide exit tunnel on the outside of the ribosome. Forms the main docking site for trigger factor binding to the ribosome. In Ectopseudomonas mendocina (strain ymp) (Pseudomonas mendocina), this protein is Large ribosomal subunit protein uL23.